A 183-amino-acid chain; its full sequence is MQHTNAPLWRPQSELTPLPDTSTLDWLFDEGSLTRRLTHLSDDGFSVTPLFEGWQTLRDDECAALDLAEGSEGWVREVYLRGHGQAWVFARSVASRSALQGDGLHMDELGSRSLGELLFCDHAFQRRAIEVCHYPEHWLPEGSRAAGLWGRRSRFDRGALSVLVAEIFLPTLWEAVRARPENC.

Substrate is bound by residues R76, L114, and E166.

The protein belongs to the UbiC family.

It localises to the cytoplasm. It catalyses the reaction chorismate = 4-hydroxybenzoate + pyruvate. The protein operates within cofactor biosynthesis; ubiquinone biosynthesis. Removes the pyruvyl group from chorismate, with concomitant aromatization of the ring, to provide 4-hydroxybenzoate (4HB) for the ubiquinone pathway. The protein is Probable chorismate pyruvate-lyase 2 of Pseudomonas fluorescens (strain Pf0-1).